A 452-amino-acid chain; its full sequence is Transcription factor ETV6 (452 aa).

Lys11 bears the N6-acetyllysine; alternate mark. Lys11 is covalently cross-linked (Glycyl lysine isopeptide (Lys-Gly) (interchain with G-Cter in SUMO2); alternate). Thr18 bears the Phosphothreonine mark. The residue at position 22 (Ser22) is a Phosphoserine. The 85-residue stretch at 40–124 folds into the PNT domain; that stretch reads ALRMEEDSIR…ELLQHILKQR (85 aa). A disordered region spans residues 154-262; that stretch reads EDNGVQRTSR…PRPSSPRQEG (109 aa). The segment covering 158–174 has biased composition (polar residues); the sequence is VQRTSRPSAENVHQNPP. Phosphoserine is present on residues Ser213, Ser238, and Ser257. A Glycyl lysine isopeptide (Lys-Gly) (interchain with G-Cter in SUMO2) cross-link involves residue Lys288. An N6-acetyllysine; alternate modification is found at Lys302. Residue Lys302 forms a Glycyl lysine isopeptide (Lys-Gly) (interchain with G-Cter in SUMO2); alternate linkage. A Phosphoserine modification is found at Ser323. Residues 339 to 420 constitute a DNA-binding region (ETS); sequence RLLWDYVYQL…PGQRLLFRFM (82 aa). Glycyl lysine isopeptide (Lys-Gly) (interchain with G-Cter in SUMO2) cross-links involve residues Lys403 and Lys421.

Belongs to the ETS family. As to quaternary structure, can form homodimers or heterodimers with TEL2 or FLI1. Interacts with L3MBTL1 and HDAC9.

The protein localises to the nucleus. In terms of biological role, transcriptional repressor; binds to the DNA sequence 5'-CCGGAAGT-3'. Plays a role in hematopoiesis and malignant transformation. The sequence is that of Transcription factor ETV6 (ETV6) from Bos taurus (Bovine).